A 681-amino-acid polypeptide reads, in one-letter code: Cell cycle checkpoint protein RAD17 (681 aa).

Residues aspartate 17–aspartate 25 carry the RAD1-binding motif motif. The segment at valine 42–phenylalanine 61 is disordered. Position 55 is a phosphothreonine (threonine 55). Residues serine 71 and serine 86 each carry the phosphoserine modification. Position 137-144 (glycine 137–threonine 144) interacts with ATP. Disordered regions lie at residues serine 344–arginine 377 and histidine 606–threonine 681. Serine 359 carries the post-translational modification Phosphoserine. The tract at residues leucine 432–threonine 681 is interaction with MCM7. Polar residues predominate over residues glutamate 631–serine 662. Threonine 633 bears the Phosphothreonine; by ATM mark. Phosphoserine; by ATR and ATM occurs at positions 646 and 656. Over residues aspartate 666–threonine 681 the composition is skewed to acidic residues.

This sequence belongs to the rad17/RAD24 family. Part of a DNA-binding complex containing RFC2, RFC3, RFC4 and RFC5. Interacts with RAD1 and RAD9 within the 9-1-1 (RAD1-RAD9-HUS1) complex. Interacts with RAD9B, POLE, SNU13 and MCM7. DNA damage promotes interaction with ATR or ATM and disrupts interaction with the 9-1-1 (RAD1-RAD9-HUS1) complex. Interacts (when phosphorylated) with NBN; promoting recruitment of the MRN complex to DNA damage sites. In terms of processing, phosphorylation on Ser-646 and Ser-656 is cell cycle-regulated, enhanced by genotoxic stress, and required for activation of checkpoint signaling. Phosphorylation is mediated by ATR upon UV or replication arrest, whereas it may be mediated both by ATR and ATM upon ionizing radiation. Phosphorylation on both sites is required for interaction with RAD1 but dispensable for interaction with RFC3 or RFC4. Phosphorylation at Thr-633 by ATM in response to DNA damage promotes interaction with NBN and recruitment of the MRN complex to DNA damage sites. As to expression, overexpressed in various cancer cell lines and in colon carcinoma (at protein level). Isoform 2 and isoform 3 are the most abundant isoforms in non irradiated cells (at protein level). Ubiquitous at low levels. Highly expressed in testis, where it is expressed within the germinal epithelium of the seminiferous tubuli. Weakly expressed in seminomas (testicular tumors).

Its subcellular location is the nucleus. The protein localises to the chromosome. Essential for sustained cell growth, maintenance of chromosomal stability, and ATR-dependent checkpoint activation upon DNA damage. Has a weak ATPase activity required for binding to chromatin. Participates in the recruitment of the 9-1-1 (RAD1-RAD9-HUS1) complex and RHNO1 onto chromatin, and in CHEK1 activation. Involved in homologous recombination by mediating recruitment of the MRN complex to DNA damage sites. May also serve as a sensor of DNA replication progression. The polypeptide is Cell cycle checkpoint protein RAD17 (Homo sapiens (Human)).